Reading from the N-terminus, the 252-residue chain is Triosephosphate isomerase (252 aa).

Residue 9-11 (NWK) coordinates substrate. The active-site Electrophile is the histidine 98. Glutamate 170 serves as the catalytic Proton acceptor. Glycine 176 and serine 215 together coordinate substrate.

This sequence belongs to the triosephosphate isomerase family. In terms of assembly, homodimer.

It localises to the cytoplasm. It catalyses the reaction D-glyceraldehyde 3-phosphate = dihydroxyacetone phosphate. Its pathway is carbohydrate biosynthesis; gluconeogenesis. It functions in the pathway carbohydrate degradation; glycolysis; D-glyceraldehyde 3-phosphate from glycerone phosphate: step 1/1. In terms of biological role, involved in the gluconeogenesis. Catalyzes stereospecifically the conversion of dihydroxyacetone phosphate (DHAP) to D-glyceraldehyde-3-phosphate (G3P). This is Triosephosphate isomerase from Buchnera aphidicola subsp. Baizongia pistaciae (strain Bp).